The primary structure comprises 1087 residues: Error-prone DNA polymerase 3 (1087 aa).

Residues 1040-1064 are disordered; sequence AGRGDEFAHGSPGSSDTRDKSKPVV.

This sequence belongs to the DNA polymerase type-C family. DnaE2 subfamily.

Its subcellular location is the cytoplasm. The enzyme catalyses DNA(n) + a 2'-deoxyribonucleoside 5'-triphosphate = DNA(n+1) + diphosphate. Its function is as follows. DNA polymerase involved in damage-induced mutagenesis and translesion synthesis (TLS). It is not the major replicative DNA polymerase. The polypeptide is Error-prone DNA polymerase 3 (Agrobacterium fabrum (strain C58 / ATCC 33970) (Agrobacterium tumefaciens (strain C58))).